The sequence spans 147 residues: Truncated RecQ DNA helicase-like protein C212.06c (147 aa).

The region spanning 1–72 (MGVRLVVHYR…CVRSFLASEM (72 aa)) is the Helicase C-terminal domain. The segment at 100 to 147 (ETPKPAIATHSRYNASFSSSPPPQPGSSSGMSAMNTNTTSTTPVSGKT) is disordered. The segment covering 125 to 141 (GSSSGMSAMNTNTTSTT) has biased composition (low complexity).

This sequence belongs to the helicase family. RecQ subfamily.

In terms of biological role, truncated ATP-dependent 3'-5' DNA helicase. In Schizosaccharomyces pombe (strain 972 / ATCC 24843) (Fission yeast), this protein is Truncated RecQ DNA helicase-like protein C212.06c.